A 167-amino-acid polypeptide reads, in one-letter code: Small ribosomal subunit protein uS5 (167 aa).

One can recognise an S5 DRBM domain in the interval 11–74 (LQEKLIAVNR…EKARRAMINV (64 aa)).

The protein belongs to the universal ribosomal protein uS5 family. Part of the 30S ribosomal subunit. Contacts proteins S4 and S8.

With S4 and S12 plays an important role in translational accuracy. Its function is as follows. Located at the back of the 30S subunit body where it stabilizes the conformation of the head with respect to the body. The sequence is that of Small ribosomal subunit protein uS5 from Yersinia enterocolitica serotype O:8 / biotype 1B (strain NCTC 13174 / 8081).